A 261-amino-acid chain; its full sequence is Imidazole glycerol phosphate synthase subunit HisF (261 aa).

Residues aspartate 16 and aspartate 135 contribute to the active site.

This sequence belongs to the HisA/HisF family. In terms of assembly, heterodimer of HisH and HisF.

The protein localises to the cytoplasm. The catalysed reaction is 5-[(5-phospho-1-deoxy-D-ribulos-1-ylimino)methylamino]-1-(5-phospho-beta-D-ribosyl)imidazole-4-carboxamide + L-glutamine = D-erythro-1-(imidazol-4-yl)glycerol 3-phosphate + 5-amino-1-(5-phospho-beta-D-ribosyl)imidazole-4-carboxamide + L-glutamate + H(+). Its pathway is amino-acid biosynthesis; L-histidine biosynthesis; L-histidine from 5-phospho-alpha-D-ribose 1-diphosphate: step 5/9. In terms of biological role, IGPS catalyzes the conversion of PRFAR and glutamine to IGP, AICAR and glutamate. The HisF subunit catalyzes the cyclization activity that produces IGP and AICAR from PRFAR using the ammonia provided by the HisH subunit. The polypeptide is Imidazole glycerol phosphate synthase subunit HisF (Mycolicibacterium smegmatis (strain ATCC 700084 / mc(2)155) (Mycobacterium smegmatis)).